Reading from the N-terminus, the 88-residue chain is Small ribosomal subunit protein uS15 (88 aa).

It belongs to the universal ribosomal protein uS15 family. In terms of assembly, part of the 30S ribosomal subunit. Forms a bridge to the 50S subunit in the 70S ribosome, contacting the 23S rRNA.

Functionally, one of the primary rRNA binding proteins, it binds directly to 16S rRNA where it helps nucleate assembly of the platform of the 30S subunit by binding and bridging several RNA helices of the 16S rRNA. Forms an intersubunit bridge (bridge B4) with the 23S rRNA of the 50S subunit in the ribosome. In Polaromonas naphthalenivorans (strain CJ2), this protein is Small ribosomal subunit protein uS15.